A 296-amino-acid chain; its full sequence is Phosphoribosylaminoimidazole-succinocarboxamide synthase (296 aa).

Belongs to the SAICAR synthetase family.

It carries out the reaction 5-amino-1-(5-phospho-D-ribosyl)imidazole-4-carboxylate + L-aspartate + ATP = (2S)-2-[5-amino-1-(5-phospho-beta-D-ribosyl)imidazole-4-carboxamido]succinate + ADP + phosphate + 2 H(+). It functions in the pathway purine metabolism; IMP biosynthesis via de novo pathway; 5-amino-1-(5-phospho-D-ribosyl)imidazole-4-carboxamide from 5-amino-1-(5-phospho-D-ribosyl)imidazole-4-carboxylate: step 1/2. This is Phosphoribosylaminoimidazole-succinocarboxamide synthase from Geobacter metallireducens (strain ATCC 53774 / DSM 7210 / GS-15).